The sequence spans 488 residues: Proline--tRNA ligase (488 aa).

Belongs to the class-II aminoacyl-tRNA synthetase family. ProS type 3 subfamily. As to quaternary structure, homodimer.

The protein localises to the cytoplasm. It catalyses the reaction tRNA(Pro) + L-proline + ATP = L-prolyl-tRNA(Pro) + AMP + diphosphate. In terms of biological role, catalyzes the attachment of proline to tRNA(Pro) in a two-step reaction: proline is first activated by ATP to form Pro-AMP and then transferred to the acceptor end of tRNA(Pro). The protein is Proline--tRNA ligase of Pyrobaculum islandicum (strain DSM 4184 / JCM 9189 / GEO3).